A 369-amino-acid chain; its full sequence is Cyanuric acid amidohydrolase (369 aa).

An RU A region spans residues 1–100 (MPRRAEILRL…HWLVIAAREA (100 aa)). Residues Arg53 and 81–82 (SG) each bind substrate. Positions 106–242 (ALAVGQARTP…HEVVVMGMSP (137 aa)) are RU B. The active site involves Lys155. Substrate-binding positions include Arg187 and 225–226 (SA). Ser225 acts as the Nucleophile in catalysis. The segment at 248–369 (LVIDHAVMAD…ARRSGAAGPA (122 aa)) is RU C. Glu296 serves as a coordination point for Mg(2+). Residues Arg323 and 342-343 (SG) each bind substrate. Residues Ala345, Gln348, Gly349, Pro350, and Gly353 each coordinate Mg(2+).

The protein belongs to the cyclic amide hydrolase (CyAH) family. As to quaternary structure, homotetramer.

It catalyses the reaction cyanurate + H2O = 1-carboxybiuret + H(+). Its pathway is xenobiotic degradation; atrazine degradation; biuret from cyanurate: step 1/1. Inhibited by barbituric acid. Responsible for the hydrolysis of cyanuric acid, an intermediate formed during catabolism of s-triazine based compounds in herbicides such as atrazine and polymers such as melamine. Catalyzes the hydrolytic opening of the s-triazine ring of cyanuric acid (2,4,6-trihydroxy-s-triazine) to yield carbon dioxide and carboxybiuret, which spontaneously decarboxylates to biuret. This is Cyanuric acid amidohydrolase from Methylobacterium sp. (strain 4-46).